A 447-amino-acid chain; its full sequence is N-succinylarginine dihydrolase (447 aa).

Substrate is bound by residues 19-28, Asn110, and 137-138; these read AGLSFGNEAS and HR. Glu174 is an active-site residue. Position 212 (Arg212) interacts with substrate. Residue His248 is part of the active site. Positions 250 and 359 each coordinate substrate. Cys365 (nucleophile) is an active-site residue.

The protein belongs to the succinylarginine dihydrolase family. Homodimer.

The catalysed reaction is N(2)-succinyl-L-arginine + 2 H2O + 2 H(+) = N(2)-succinyl-L-ornithine + 2 NH4(+) + CO2. It functions in the pathway amino-acid degradation; L-arginine degradation via AST pathway; L-glutamate and succinate from L-arginine: step 2/5. Catalyzes the hydrolysis of N(2)-succinylarginine into N(2)-succinylornithine, ammonia and CO(2). This Escherichia fergusonii (strain ATCC 35469 / DSM 13698 / CCUG 18766 / IAM 14443 / JCM 21226 / LMG 7866 / NBRC 102419 / NCTC 12128 / CDC 0568-73) protein is N-succinylarginine dihydrolase.